The sequence spans 182 residues: UPF0587 protein YCR090C (182 aa).

Positions 36, 39, 70, and 73 each coordinate Zn(2+).

The protein belongs to the UPF0587 family.

The chain is UPF0587 protein YCR090C from Saccharomyces cerevisiae (strain ATCC 204508 / S288c) (Baker's yeast).